A 104-amino-acid polypeptide reads, in one-letter code: Glycine-rich protein (104 aa).

The first 18 residues, 1–18 (MKSMIAAILFALVATSLA), serve as a signal peptide directing secretion.

Belongs to the non-disulfide-bridged peptide (NDBP) superfamily. Expressed by the venom gland.

It localises to the secreted. This chain is Glycine-rich protein, found in Lychas mucronatus (Chinese swimming scorpion).